The following is a 270-amino-acid chain: Interleukin-33 (270 aa).

The homeodomain-like HTH domain stretch occupies residues 1 to 65 (MKPKMKYSTN…EACYFRRETT (65 aa)). Residues 1-94 (MKPKMKYSTN…CQQQSTVECF (94 aa)) constitute a propeptide that is removed on maturation. The interaction with RELA stretch occupies residues 64–111 (TTKRPSLKTGRKHKRHLVLAACQQQSTVECFAFGISGVQKYTRALHDS).

It belongs to the IL-1 family. Highly divergent. In terms of assembly, forms a 1:1:1 heterotrimeric complex with its primary high-affinity receptor IL1RL1 and the coreceptor IL1RAP. Interacts with cargo receptor TMED10; the interaction mediates the translocation from the cytoplasm into the ERGIC (endoplasmic reticulum-Golgi intermediate compartment) and thereby secretion. As to quaternary structure, (Microbial infection) Interacts (in reduced form) with H.polygyrus ARI. The full-length protein can be released from cells and is able to signal via the IL1RL1/ST2 receptor. However, proteolytic processing by CELA1, CSTG/cathepsin G and ELANE/neutrophil elastase produces C-terminal peptides that are more active than the unprocessed full length protein. May also be proteolytically processed by calpains. Proteolytic cleavage mediated by apoptotic caspases including CASP3 and CASP7 results in IL33 inactivation. In vitro proteolytic cleavage by CASP1 was reported but could not be confirmed in vivo suggesting that IL33 is probably not a direct substrate for that caspase. In terms of tissue distribution, expressed at high level in high endothelial venules found in tonsils, Peyer patches and mesenteric lymph nodes. Almost undetectable in placenta.

Its subcellular location is the nucleus. It localises to the chromosome. The protein localises to the cytoplasm. The protein resides in the cytoplasmic vesicle. It is found in the secretory vesicle. Its subcellular location is the secreted. Cytokine that binds to and signals through the IL1RL1/ST2 receptor which in turn activates NF-kappa-B and MAPK signaling pathways in target cells. Involved in the maturation of Th2 cells inducing the secretion of T-helper type 2-associated cytokines. Also involved in activation of mast cells, basophils, eosinophils and natural killer cells. Acts as an enhancer of polarization of alternatively activated macrophages. Acts as a chemoattractant for Th2 cells, and may function as an 'alarmin', that amplifies immune responses during tissue injury. Induces rapid UCP2-dependent mitochondrial rewiring that attenuates the generation of reactive oxygen species and preserves the integrity of Krebs cycle required for persistent production of itaconate and subsequent GATA3-dependent differentiation of inflammation-resolving alternatively activated macrophages. Functionally, in quiescent endothelia the uncleaved form is constitutively and abundantly expressed, and acts as a chromatin-associated nuclear factor with transcriptional repressor properties, it may sequester nuclear NF-kappaB/RELA, lowering expression of its targets. This form is rapidely lost upon angiogenic or pro-inflammatory activation. The protein is Interleukin-33 of Homo sapiens (Human).